A 603-amino-acid polypeptide reads, in one-letter code: Aspartate--tRNA(Asp/Asn) ligase (603 aa).

The tract at residues 205 to 208 is aspartate; the sequence is QLFK. An L-aspartate-binding site is contributed by R227. ATP-binding positions include 227–229 and Q236; that span reads RDE. Position 463 (H463) interacts with L-aspartate. ATP is bound at residue E497. Position 504 (R504) interacts with L-aspartate. 549–552 lines the ATP pocket; that stretch reads GMDR.

Belongs to the class-II aminoacyl-tRNA synthetase family. Type 1 subfamily. In terms of assembly, homodimer.

The protein resides in the cytoplasm. It catalyses the reaction tRNA(Asx) + L-aspartate + ATP = L-aspartyl-tRNA(Asx) + AMP + diphosphate. In terms of biological role, aspartyl-tRNA synthetase with relaxed tRNA specificity since it is able to aspartylate not only its cognate tRNA(Asp) but also tRNA(Asn). Reaction proceeds in two steps: L-aspartate is first activated by ATP to form Asp-AMP and then transferred to the acceptor end of tRNA(Asp/Asn). The protein is Aspartate--tRNA(Asp/Asn) ligase of Anaeromyxobacter sp. (strain K).